Here is a 156-residue protein sequence, read N- to C-terminus: Ribosomal RNA large subunit methyltransferase H (156 aa).

S-adenosyl-L-methionine is bound by residues L73, G104, and 123–128 (LSALTL).

The protein belongs to the RNA methyltransferase RlmH family. In terms of assembly, homodimer.

It localises to the cytoplasm. It catalyses the reaction pseudouridine(1915) in 23S rRNA + S-adenosyl-L-methionine = N(3)-methylpseudouridine(1915) in 23S rRNA + S-adenosyl-L-homocysteine + H(+). Its function is as follows. Specifically methylates the pseudouridine at position 1915 (m3Psi1915) in 23S rRNA. This chain is Ribosomal RNA large subunit methyltransferase H, found in Colwellia psychrerythraea (strain 34H / ATCC BAA-681) (Vibrio psychroerythus).